Reading from the N-terminus, the 407-residue chain is Argininosuccinate synthase (407 aa).

ATP is bound by residues A16–S24 and A44. Residues Y96 and S101 each contribute to the L-citrulline site. G126 serves as a coordination point for ATP. T128, N132, and D133 together coordinate L-aspartate. An L-citrulline-binding site is contributed by N132. R136, S185, S194, E270, and Y282 together coordinate L-citrulline.

It belongs to the argininosuccinate synthase family. Type 1 subfamily. As to quaternary structure, homotetramer.

It localises to the cytoplasm. It carries out the reaction L-citrulline + L-aspartate + ATP = 2-(N(omega)-L-arginino)succinate + AMP + diphosphate + H(+). Its pathway is amino-acid biosynthesis; L-arginine biosynthesis; L-arginine from L-ornithine and carbamoyl phosphate: step 2/3. In Shewanella sp. (strain ANA-3), this protein is Argininosuccinate synthase.